We begin with the raw amino-acid sequence, 460 residues long: Chromosomal replication initiator protein DnaA (460 aa).

Positions 1 to 73 (MEISIDSLWS…ANVVQSILGH (73 aa)) are domain I, interacts with DnaA modulators. The interval 73-116 (HPVEIYITVAKGEEFEEIGGGGAWELPTTNSIYETPNQNRQPNT) is domain II. The segment at 117-333 (ELNAKYVFSR…GALTRALAYI (217 aa)) is domain III, AAA+ region. Residues glycine 161, glycine 163, lysine 164, and threonine 165 each contribute to the ATP site. Residues 334-460 (SIWGLPMTVA…MNSRSRKPSL (127 aa)) are domain IV, binds dsDNA.

The protein belongs to the DnaA family. As to quaternary structure, oligomerizes as a right-handed, spiral filament on DNA at oriC.

Its subcellular location is the cytoplasm. Functionally, plays an essential role in the initiation and regulation of chromosomal replication. ATP-DnaA binds to the origin of replication (oriC) to initiate formation of the DNA replication initiation complex once per cell cycle. Binds the DnaA box (a 9 base pair repeat at the origin) and separates the double-stranded (ds)DNA. Forms a right-handed helical filament on oriC DNA; dsDNA binds to the exterior of the filament while single-stranded (ss)DNA is stabiized in the filament's interior. The ATP-DnaA-oriC complex binds and stabilizes one strand of the AT-rich DNA unwinding element (DUE), permitting loading of DNA polymerase. After initiation quickly degrades to an ADP-DnaA complex that is not apt for DNA replication. Binds acidic phospholipids. The sequence is that of Chromosomal replication initiator protein DnaA from Trichormus variabilis (strain ATCC 29413 / PCC 7937) (Anabaena variabilis).